A 160-amino-acid chain; its full sequence is Large ribosomal subunit protein uL22c (160 aa).

Belongs to the universal ribosomal protein uL22 family. In terms of assembly, part of the 50S ribosomal subunit.

Its subcellular location is the plastid. It localises to the chloroplast. This protein binds specifically to 23S rRNA. Its function is as follows. The globular domain of the protein is located near the polypeptide exit tunnel on the outside of the subunit, while an extended beta-hairpin is found that lines the wall of the exit tunnel in the center of the 70S ribosome. The sequence is that of Large ribosomal subunit protein uL22c (rpl22) from Arabis hirsuta (Hairy rock-cress).